We begin with the raw amino-acid sequence, 298 residues long: Bifunctional methyltransferase/endonuclease (298 aa).

The probable methylated-DNA--protein-cysteine methyltransferase stretch occupies residues 1–79 (MQSIDLYSYL…SLGIDEKIRR (79 aa)). C56 is an active-site residue. Residues 80 to 298 (LRNDGIEINN…TVALRRNNII (219 aa)) are endonuclease V. 2 residues coordinate Mg(2+): D137 and D197.

It in the N-terminal section; belongs to the MGMT family. This sequence in the C-terminal section; belongs to the endonuclease V family. Mg(2+) is required as a cofactor.

The protein localises to the cytoplasm. It catalyses the reaction Endonucleolytic cleavage at apurinic or apyrimidinic sites to products with a 5'-phosphate.. Its function is as follows. DNA repair enzyme involved in the repair of deaminated bases. Selectively cleaves double-stranded DNA at the second phosphodiester bond 3' to a deoxyinosine leaving behind the intact lesion on the nicked DNA. The polypeptide is Bifunctional methyltransferase/endonuclease (Picrophilus torridus (strain ATCC 700027 / DSM 9790 / JCM 10055 / NBRC 100828 / KAW 2/3)).